Reading from the N-terminus, the 115-residue chain is Large ribosomal subunit protein bL20c (115 aa).

This sequence belongs to the bacterial ribosomal protein bL20 family.

The protein localises to the plastid. The protein resides in the chloroplast. Binds directly to 23S ribosomal RNA and is necessary for the in vitro assembly process of the 50S ribosomal subunit. It is not involved in the protein synthesizing functions of that subunit. This is Large ribosomal subunit protein bL20c from Chaetosphaeridium globosum (Charophycean green alga).